The chain runs to 446 residues: Asparagine--tRNA ligase (446 aa).

Belongs to the class-II aminoacyl-tRNA synthetase family. As to quaternary structure, homodimer.

The protein localises to the cytoplasm. The enzyme catalyses tRNA(Asn) + L-asparagine + ATP = L-asparaginyl-tRNA(Asn) + AMP + diphosphate + H(+). The sequence is that of Asparagine--tRNA ligase from Sorangium cellulosum (strain So ce56) (Polyangium cellulosum (strain So ce56)).